A 70-amino-acid chain; its full sequence is DNA-directed RNA polymerase subunit omega (70 aa).

It belongs to the RNA polymerase subunit omega family. As to quaternary structure, the RNAP catalytic core consists of 2 alpha, 1 beta, 1 beta' and 1 omega subunit. When a sigma factor is associated with the core the holoenzyme is formed, which can initiate transcription.

It catalyses the reaction RNA(n) + a ribonucleoside 5'-triphosphate = RNA(n+1) + diphosphate. Its function is as follows. Promotes RNA polymerase assembly. Latches the N- and C-terminal regions of the beta' subunit thereby facilitating its interaction with the beta and alpha subunits. In Thermoanaerobacter sp. (strain X514), this protein is DNA-directed RNA polymerase subunit omega.